A 187-amino-acid chain; its full sequence is Putative adenylate kinase (187 aa).

Residues Gly10, Gly12, Lys13, Thr14, and Ile15 each coordinate ATP. Residues 30-53 (SLSQFVIENKLYTEYDELRQSYII) form an NMP region. Residues 103 to 113 (GRGWADIKVAE) form an LID region. ATP is bound at residue Arg104.

It belongs to the adenylate kinase family. AK6 subfamily. In terms of assembly, interacts with uS11. Not a structural component of 40S pre-ribosomes, but transiently interacts with them by binding to uS11.

The enzyme catalyses AMP + ATP = 2 ADP. The catalysed reaction is ATP + H2O = ADP + phosphate + H(+). Functionally, broad-specificity nucleoside monophosphate (NMP) kinase that catalyzes the reversible transfer of the terminal phosphate group between nucleoside triphosphates and monophosphates. Also has ATPase activity. Involved in the late maturation steps of the 30S ribosomal particles, specifically 16S rRNA maturation. While NMP activity is not required for ribosome maturation, ATPase activity is. Associates transiently with small ribosomal subunit protein uS11. ATP hydrolysis breaks the interaction with uS11. May temporarily remove uS11 from the ribosome to enable a conformational change of the ribosomal RNA that is needed for the final maturation step of the small ribosomal subunit. In Saccharolobus islandicus (strain L.S.2.15 / Lassen #1) (Sulfolobus islandicus), this protein is Putative adenylate kinase.